The sequence spans 145 residues: Deoxyuridine 5'-triphosphate nucleotidohydrolase (145 aa).

Residues 62 to 64, Asn75, and 79 to 81 contribute to the substrate site; these read RSG and TVD.

This sequence belongs to the dUTPase family. The cofactor is Mg(2+).

The catalysed reaction is dUTP + H2O = dUMP + diphosphate + H(+). It functions in the pathway pyrimidine metabolism; dUMP biosynthesis; dUMP from dCTP (dUTP route): step 2/2. In terms of biological role, this enzyme is involved in nucleotide metabolism: it produces dUMP, the immediate precursor of thymidine nucleotides and it decreases the intracellular concentration of dUTP so that uracil cannot be incorporated into DNA. This is Deoxyuridine 5'-triphosphate nucleotidohydrolase from Gloeothece citriformis (strain PCC 7424) (Cyanothece sp. (strain PCC 7424)).